Here is a 150-residue protein sequence, read N- to C-terminus: Detocs response regulatory protein DtcB (150 aa).

The Response regulatory domain occupies 2-150 (KILIADDNIQ…TDLIKKITEL (149 aa)). Aspartate 54 carries the 4-aspartylphosphate modification.

In terms of processing, probably phosphorylated by DtcA.

Functionally, possible phosphate scavenger member of the two-component regulatory system Detocs that confers resistance to bacteriophage. When the system (DtcA-DtcB-DtcC) is expressed in a susceptible E.coli (strain MG1655) it confers resistance to bacteriophages T2, T4, T5, T7, SECphi4, SECphi6 and SECphi27; the level of resistance varies, resistance to T2, T7 and SECphi4 is not very high. DtcA probably autophosphorylates upon sensing viral infection, and subsequently transfers the phosphate signal to DtcC which activates it, leading to an antiviral defense; DtcB (this subunit) may scavenge phosphorylation signals from accidental activation of DtcA. The sequence is that of Detocs response regulatory protein DtcB from Enterobacter cloacae (strain JD6301).